The following is a 302-amino-acid chain: 1D-myo-inositol 2-acetamido-2-deoxy-alpha-D-glucopyranoside deacetylase (302 aa).

The Zn(2+) site is built by H12, D15, and H147.

This sequence belongs to the MshB deacetylase family. Requires Zn(2+) as cofactor.

The enzyme catalyses 1D-myo-inositol 2-acetamido-2-deoxy-alpha-D-glucopyranoside + H2O = 1D-myo-inositol 2-amino-2-deoxy-alpha-D-glucopyranoside + acetate. Catalyzes the deacetylation of 1D-myo-inositol 2-acetamido-2-deoxy-alpha-D-glucopyranoside (GlcNAc-Ins) in the mycothiol biosynthesis pathway. This chain is 1D-myo-inositol 2-acetamido-2-deoxy-alpha-D-glucopyranoside deacetylase, found in Thermobispora bispora (strain ATCC 19993 / DSM 43833 / CBS 139.67 / JCM 10125 / KCTC 9307 / NBRC 14880 / R51).